Reading from the N-terminus, the 142-residue chain is Phosphoribosyl-AMP cyclohydrolase (142 aa).

Asp92 contributes to the Mg(2+) binding site. Cys93 contributes to the Zn(2+) binding site. Asp94 and Asp96 together coordinate Mg(2+). Residues Cys109 and Cys116 each contribute to the Zn(2+) site.

It belongs to the PRA-CH family. In terms of assembly, homodimer. Requires Mg(2+) as cofactor. It depends on Zn(2+) as a cofactor.

It is found in the cytoplasm. It carries out the reaction 1-(5-phospho-beta-D-ribosyl)-5'-AMP + H2O = 1-(5-phospho-beta-D-ribosyl)-5-[(5-phospho-beta-D-ribosylamino)methylideneamino]imidazole-4-carboxamide. Its pathway is amino-acid biosynthesis; L-histidine biosynthesis; L-histidine from 5-phospho-alpha-D-ribose 1-diphosphate: step 3/9. Functionally, catalyzes the hydrolysis of the adenine ring of phosphoribosyl-AMP. The protein is Phosphoribosyl-AMP cyclohydrolase of Alcanivorax borkumensis (strain ATCC 700651 / DSM 11573 / NCIMB 13689 / SK2).